We begin with the raw amino-acid sequence, 415 residues long: UDP-galactose transporter homolog 1 (415 aa).

The disordered stretch occupies residues 1-39 (MHLVPEGSESMSTQQNGSAQKPVTLNGSASTKGQAPEAP). The segment covering 9–33 (ESMSTQQNGSAQKPVTLNGSASTKG) has biased composition (polar residues). Residues N16 and N26 are each glycosylated (N-linked (GlcNAc...) asparagine). Helical transmembrane passes span 45–65 (LIQL…WGVL), 95–115 (IVLN…YLYF), 132–152 (ILFP…FGYA), 161–181 (TFIL…LTIF), and 185–205 (YPLY…TFTL). N-linked (GlcNAc...) asparagine glycosylation occurs at N221. The helical transmembrane segment at 223 to 243 (SGSSLYGIFLLSINLLLDGLT) threads the bilayer. The N-linked (GlcNAc...) asparagine glycan is linked to N244. The next 3 membrane-spanning stretches (helical) occupy residues 281–301 (LLVM…PIPI), 325–345 (NVLG…YTLS), and 368–388 (VFWF…LVFG).

It belongs to the nucleotide-sugar transporter family. SLC35B subfamily.

It is found in the endoplasmic reticulum membrane. May be involved in specific transport of UDP-Gal from the cytosol to the Golgi lumen. Involved in the maintenance of optimal conditions for the folding of secretory pathway proteins in the endoplasmic reticulum. The chain is UDP-galactose transporter homolog 1 (hut1) from Aspergillus fumigatus (strain ATCC MYA-4609 / CBS 101355 / FGSC A1100 / Af293) (Neosartorya fumigata).